Reading from the N-terminus, the 72-residue chain is MSKDDVIEIDGNVIEALPNATFKVELDNKHVILCHIAGKMRMHYIKIMPGDRVKVELTPYSLDKGRITYRYK.

An S1-like domain is found at 1–72; that stretch reads MSKDDVIEID…DKGRITYRYK (72 aa).

Belongs to the IF-1 family. As to quaternary structure, component of the 30S ribosomal translation pre-initiation complex which assembles on the 30S ribosome in the order IF-2 and IF-3, IF-1 and N-formylmethionyl-tRNA(fMet); mRNA recruitment can occur at any time during PIC assembly.

Its subcellular location is the cytoplasm. In terms of biological role, one of the essential components for the initiation of protein synthesis. Stabilizes the binding of IF-2 and IF-3 on the 30S subunit to which N-formylmethionyl-tRNA(fMet) subsequently binds. Helps modulate mRNA selection, yielding the 30S pre-initiation complex (PIC). Upon addition of the 50S ribosomal subunit IF-1, IF-2 and IF-3 are released leaving the mature 70S translation initiation complex. This chain is Translation initiation factor IF-1, found in Campylobacter hominis (strain ATCC BAA-381 / DSM 21671 / CCUG 45161 / LMG 19568 / NCTC 13146 / CH001A).